A 255-amino-acid polypeptide reads, in one-letter code: 1-(5-phosphoribosyl)-5-[(5-phosphoribosylamino)methylideneamino] imidazole-4-carboxamide isomerase (255 aa).

The Proton acceptor role is filled by Asp-8. The active-site Proton donor is the Asp-129.

It belongs to the HisA/HisF family.

The protein resides in the cytoplasm. The enzyme catalyses 1-(5-phospho-beta-D-ribosyl)-5-[(5-phospho-beta-D-ribosylamino)methylideneamino]imidazole-4-carboxamide = 5-[(5-phospho-1-deoxy-D-ribulos-1-ylimino)methylamino]-1-(5-phospho-beta-D-ribosyl)imidazole-4-carboxamide. It functions in the pathway amino-acid biosynthesis; L-histidine biosynthesis; L-histidine from 5-phospho-alpha-D-ribose 1-diphosphate: step 4/9. This chain is 1-(5-phosphoribosyl)-5-[(5-phosphoribosylamino)methylideneamino] imidazole-4-carboxamide isomerase, found in Prochlorococcus marinus (strain MIT 9312).